The primary structure comprises 50 residues: AEDSRGTQLHRALRKTTKLSLSIRCKGPGASCIRIAYNCCKYSCRNGKCS.

A1 is a signal peptide. Positions 2 to 24 (EDSRGTQLHRALRKTTKLSLSIR) are excised as a propeptide. Disulfide bonds link C25/C40, C32/C44, and C39/C49.

The protein belongs to the conotoxin O1 superfamily. Expressed by the venom duct.

The protein localises to the secreted. In Conus bullatus (Bubble cone), this protein is Conotoxin Bu13.